Consider the following 887-residue polypeptide: Pyruvate dehydrogenase E1 component (887 aa).

Mg(2+) contacts are provided by aspartate 231, asparagine 261, and glutamine 263. Lysine 716 bears the N6-acetyllysine mark.

In terms of assembly, homodimer. Part of the PDH complex, consisting of multiple copies of pyruvate dehydrogenase (E1), dihydrolipoamide acetyltransferase (E2) and lipoamide dehydrogenase (E3). It depends on Mg(2+) as a cofactor. Thiamine diphosphate serves as cofactor.

The enzyme catalyses N(6)-[(R)-lipoyl]-L-lysyl-[protein] + pyruvate + H(+) = N(6)-[(R)-S(8)-acetyldihydrolipoyl]-L-lysyl-[protein] + CO2. Component of the pyruvate dehydrogenase (PDH) complex, that catalyzes the overall conversion of pyruvate to acetyl-CoA and CO(2). The polypeptide is Pyruvate dehydrogenase E1 component (aceE) (Escherichia coli O157:H7).